We begin with the raw amino-acid sequence, 725 residues long: ABC transporter G family member 7 (725 aa).

A helical transmembrane segment spans residues 12-34 (VVSGIGGNGVGGALAAVAAALLV). Residues 70–316 (IRWRNITCSL…YFGNFGFLCP (247 aa)) form the ABC transporter domain. 108 to 115 (GPSGSGKT) is an ATP binding site. In terms of domain architecture, ABC transmembrane type-2 spans 392–603 (RQFFLLLKRA…AFQGLCINEF (212 aa)). Helical transmembrane passes span 446-466 (LLQVAAINTAMAALTKTVGVF), 493-513 (IAEIPIGAAFPLMFGAVLYPM), 528-548 (GIVTVESFAASAMGLTVGAMV), and 553-573 (AAMAVGPSLMTVFIVFGGYYV). The interval 676–725 (NSGVQLDKAEVDQTEKPEDDDINQPLDDQNQTSDSDDELDEIRPFVLEGL) is disordered. Over residues 682-691 (DKAEVDQTEK) the composition is skewed to basic and acidic residues.

The protein belongs to the ABC transporter superfamily. ABCG family. Eye pigment precursor importer (TC 3.A.1.204) subfamily.

It localises to the membrane. The chain is ABC transporter G family member 7 (ABCG7) from Arabidopsis thaliana (Mouse-ear cress).